Here is a 317-residue protein sequence, read N- to C-terminus: SKEPVSVVLPDAEHPAFPGRTRRPGNARAGSQVTGSREVGQMPAPLSRKIGQKKQQLAQSEQQQTPKEKLSSTPGLLRSIYFSSPEDRPARLGPEYFDQPAVTLARAFLGQVLVRRLADGTELRGRIVETEAYLGPEDEAAHSRGGRQTPRNRGMFMKPGTLYVYLIYGMYFCLNVSSQGAGACVLLRALEPLEGLETMRQLRNSLRKSTVGRSLKDRELCNGPSKLCQALARSKSFDQRDLAQDEAVWLEHGPLESSSPAVVAAAAGIGHAGEWTQKPLRFYVQGSPWVSVVDRVAEQMYQPQQTACSDXALIVQK.

Positions 1 to 76 (SKEPVSVVLP…KEKLSSTPGL (76 aa)) are disordered. Positions 53–64 (KKQQLAQSEQQQ) are enriched in low complexity. A phosphoserine mark is found at S84 and S258.

It belongs to the DNA glycosylase MPG family. As to quaternary structure, binds MBD1. Binds SSBP1.

The protein resides in the cytoplasm. It is found in the mitochondrion matrix. It localises to the mitochondrion nucleoid. The protein localises to the nucleus. It carries out the reaction Hydrolysis of alkylated DNA, releasing 3-methyladenine, 3-methylguanine, 7-methylguanine and 7-methyladenine.. With respect to regulation, binding to SSBP1 in mitochondria inhibits glycosylase activity in the context of a single-stranded DNA (ssDNA), but not a double-stranded DNA (dsDNA) substrates. Its function is as follows. Hydrolysis of the deoxyribose N-glycosidic bond to excise 3-methyladenine, and 7-methylguanine from the damaged DNA polymer formed by alkylation lesions. This is DNA-3-methyladenine glycosylase (Mpg) from Rattus norvegicus (Rat).